The chain runs to 150 residues: UPF0756 membrane protein NTHI1233 (150 aa).

The next 4 membrane-spanning stretches (helical) occupy residues methionine 1–leucine 21, tyrosine 52–glycine 72, glycine 81–alanine 101, and isoleucine 123–leucine 143.

The protein belongs to the UPF0756 family.

The protein resides in the cell membrane. This Haemophilus influenzae (strain 86-028NP) protein is UPF0756 membrane protein NTHI1233.